The following is a 208-amino-acid chain: Uridine kinase (208 aa).

Residue 11–18 (GGTGSGKS) coordinates ATP.

Belongs to the uridine kinase family.

It localises to the cytoplasm. The enzyme catalyses uridine + ATP = UMP + ADP + H(+). It catalyses the reaction cytidine + ATP = CMP + ADP + H(+). Its pathway is pyrimidine metabolism; CTP biosynthesis via salvage pathway; CTP from cytidine: step 1/3. It functions in the pathway pyrimidine metabolism; UMP biosynthesis via salvage pathway; UMP from uridine: step 1/1. This Alkaliphilus metalliredigens (strain QYMF) protein is Uridine kinase.